We begin with the raw amino-acid sequence, 122 residues long: Proline-rich protein 15 (122 aa).

Residues 1-122 (MADSGGSSPW…FPDDPQEDKQ (122 aa)) are disordered. Ser-39 is subject to Phosphoserine. Over residues 46-56 (TSSLPENQHSN) the composition is skewed to polar residues. The segment covering 63-76 (ESLRSDKLCEEKTG) has biased composition (basic and acidic residues). Residues 80–97 (RNLKISRSGRFKEKRKMR) are compositionally biased toward basic residues. The span at 110–122 (EADFPDDPQEDKQ) shows a compositional bias: acidic residues.

The protein belongs to the PRR15 family. Exhibits a cell type specific expression pattern only in the small and large intestine and in the testis. Along the intestinal tract expression is restricted to the non-proliferating epithelial cells surrounding the villi and no expression is found in the intestinal crypts, where proliferation occurs. In the testis, it is detected only in post-mitotic secondary spermatocytes.

May have a role in proliferation and/or differentiation. This is Proline-rich protein 15 (Prr15) from Mus musculus (Mouse).